Here is a 285-residue protein sequence, read N- to C-terminus: MERKRWECPALPQGWEREEVPRRSGLSAGHRDVFYYSPSGKKFRSKPQLARYLGGSMDLSTFDFRTGKMLMNKMNKSRQRVRYDSSNQVKGKPDLNTALPVRQTASIFKQPVTKITNHPSNKVKSDPQKAVDQPRQLFWEKKLSGLSAFDIAEELVRTMDLPKGLQGVGPGCTDETLLSAIASALHTSTLPITGQLSAAVEKNPGVWLNTAQPLCKAFMVTDDDIRKQEELVQQVRKRLEEALMADMLAHVEELARDGEAPLDKACAEEEEEEEEEEEEPEPERV.

An MBD domain is found at 1–69 (MERKRWECPA…STFDFRTGKM (69 aa)). Ser56 carries the phosphoserine modification. Lys73 is covalently cross-linked (Glycyl lysine isopeptide (Lys-Gly) (interchain with G-Cter in SUMO2)). Phosphoserine is present on Ser85. Glycyl lysine isopeptide (Lys-Gly) (interchain with G-Cter in SUMO2) cross-links involve residues Lys90 and Lys92. The residue at position 144 (Ser144) is a Phosphoserine. Positions 221–279 (TDDDIRKQEELVQQVRKRLEEALMADMLAHVEELARDGEAPLDKACAEEEEEEEEEEEE) form a coiled coil. The segment covering 255-267 (ARDGEAPLDKACA) has biased composition (basic and acidic residues). The tract at residues 255 to 285 (ARDGEAPLDKACAEEEEEEEEEEEEPEPERV) is disordered. The segment covering 268 to 285 (EEEEEEEEEEEEPEPERV) has biased composition (acidic residues).

Heterodimer (via N-terminus) with MBD2. Component of the MeCP1 histone deacetylase complex. Component of the nucleosome remodeling and deacetylase (NuRD) repressor complex, composed of core proteins MTA1, MTA2, MTA3, RBBP4, RBBP7, HDAC1, HDAC2, MBD2, MBD3, and peripherally associated proteins CDK2AP1, CDK2AP2, GATAD2A, GATAD2B, CHD3, CHD4 and CHD5. The exact stoichiometry of the NuRD complex is unknown, and some subunits such as MBD2 and MBD3, GATAD2A and GATAD2B, and CHD3, CHD4 and CHD5 define mutually exclusive NuRD complexes. Interacts with MBD3L2 (via N-terminus); the interaction is direct. Interacts with BCL6. Interacts with CDK2AP1. Interacts with HDAC1. Interacts with MTA2. Interacts with DNMT1. Interacts with GATAD2A. Interacts with GATAD2B. Does not interact with PWWP2A. Does not interact with PWWP2B. Highly expressed in brain, heart, kidney, liver, lung, skeletal muscle, spleen and testis. Detected at lower levels in embryonic stem cells.

Its subcellular location is the nucleus. It is found in the chromosome. In terms of biological role, acts as a component of the histone deacetylase NuRD complex which participates in the remodeling of chromatin. Acts as transcriptional repressor and plays a role in gene silencing. Does not bind methylated DNA by itself. Binds to a lesser degree DNA containing unmethylated CpG dinucleotides. Recruits histone deacetylases and DNA methyltransferases. This Mus musculus (Mouse) protein is Methyl-CpG-binding domain protein 3 (Mbd3).